We begin with the raw amino-acid sequence, 485 residues long: Keratin, type I cytoskeletal 14 (485 aa).

Over residues 1 to 15 (MATCSRQFTSSSSMK) the composition is skewed to polar residues. A disordered region spans residues 1–21 (MATCSRQFTSSSSMKGSCGIG). A head region spans residues 1–121 (MATCSRQFTS…GLGDGLLVGS (121 aa)). Residues 122-157 (EKVTMQNLNDRLATYLDKVRALEEANSDLEVKIRDW) are coil 1A. The 312-residue stretch at 122 to 433 (EKVTMQNLND…RLLEGEDAHL (312 aa)) folds into the IF rod domain. The segment at 158-175 (YQRQRPTEIKDYSPYFKT) is linker 1. Residues 176–267 (IEDLKSKILA…KNHEEEMASM (92 aa)) are coil 1B. The linker 12 stretch occupies residues 268–290 (RGQVGGDVNVEMDAAPGVDLSRI). Residues 291–429 (LNEMRDQYEK…ATYRRLLEGE (139 aa)) form a coil 2 region. Residues 430 to 485 (DAHLSSAQFSSSSQFSSGSQSSRDVTSTNRQIRTKVMDVHDGKVVSTHEQVLRTKN) form a tail region. An interaction with Type I keratins and keratin filaments region spans residues 432–485 (HLSSAQFSSSSQFSSGSQSSRDVTSTNRQIRTKVMDVHDGKVVSTHEQVLRTKN). Residues 437–451 (QFSSSSQFSSGSQSS) are compositionally biased toward low complexity. The disordered stretch occupies residues 437 to 458 (QFSSSSQFSSGSQSSRDVTSTN). S448 carries the phosphoserine modification.

This sequence belongs to the intermediate filament family. In terms of assembly, heterotetramer of two type I and two type II keratins. Forms a disulfide-linked heterodimer (via 2B domains) with KRT5 (via 2B domains). Forms a heterodimer with KRT1; the interaction is more abundant in the absence of KRT5. Interacts with TRADD and with keratin filaments. Associates with other type I keratins. Interacts with EPPK1. Interacts with KLHL24. Interacts with PKP1 (via N-terminus) and PKP2. Post-translationally, a disulfide bond is formed between rather than within filaments and promotes the formation of a keratin filament cage around the nucleus. In terms of processing, ubiquitinated by the BCR(KLHL24) E3 ubiquitin ligase complex. As to expression, expressed in most cells of squamous cell carcinomas, in spinous and suprabasal cells around the branching papillary region of papillomas, and weakly in a few proliferative cells of hyperplastic tissue.

The protein localises to the cytoplasm. It localises to the nucleus. Its function is as follows. The nonhelical tail domain is involved in promoting KRT5-KRT14 filaments to self-organize into large bundles and enhances the mechanical properties involved in resilience of keratin intermediate filaments in vitro. The chain is Keratin, type I cytoskeletal 14 (Krt14) from Rattus norvegicus (Rat).